The chain runs to 130 residues: Large ribosomal subunit protein bL12 (130 aa).

The protein belongs to the bacterial ribosomal protein bL12 family. Homodimer. Part of the ribosomal stalk of the 50S ribosomal subunit. Forms a multimeric L10(L12)X complex, where L10 forms an elongated spine to which 2 to 4 L12 dimers bind in a sequential fashion. Binds GTP-bound translation factors.

Its function is as follows. Forms part of the ribosomal stalk which helps the ribosome interact with GTP-bound translation factors. Is thus essential for accurate translation. In Mycobacterium bovis (strain ATCC BAA-935 / AF2122/97), this protein is Large ribosomal subunit protein bL12.